A 191-amino-acid polypeptide reads, in one-letter code: Orotate phosphoribosyltransferase (191 aa).

114–122 (EDVITTGGS) is a binding site for 5-phospho-alpha-D-ribose 1-diphosphate. 2 residues coordinate orotate: threonine 118 and arginine 146.

Belongs to the purine/pyrimidine phosphoribosyltransferase family. PyrE subfamily. Homodimer. Mg(2+) is required as a cofactor.

The enzyme catalyses orotidine 5'-phosphate + diphosphate = orotate + 5-phospho-alpha-D-ribose 1-diphosphate. The protein operates within pyrimidine metabolism; UMP biosynthesis via de novo pathway; UMP from orotate: step 1/2. Functionally, catalyzes the transfer of a ribosyl phosphate group from 5-phosphoribose 1-diphosphate to orotate, leading to the formation of orotidine monophosphate (OMP). The sequence is that of Orotate phosphoribosyltransferase from Caldicellulosiruptor saccharolyticus (strain ATCC 43494 / DSM 8903 / Tp8T 6331).